An 811-amino-acid polypeptide reads, in one-letter code: tRNA(Met) cytidine acetyltransferase TmcA (811 aa).

Positions 267 and 439 each coordinate ATP. The N-acetyltransferase domain maps to 473–662; sequence KKEVYLEEPD…GEFTAIVLKP (190 aa). Acetyl-CoA contacts are provided by residues 589 to 591, glutamate 629, and arginine 636; that span reads IAT.

Belongs to the TmcA family.

It localises to the cytoplasm. It carries out the reaction cytidine(34) in elongator tRNA(Met) + acetyl-CoA + ATP + H2O = N(4)-acetylcytidine(34) in elongator tRNA(Met) + ADP + phosphate + CoA + H(+). The catalysed reaction is a cytidine in RNA + acetyl-CoA + ATP + H2O = an N(4)-acetylcytidine in RNA + ADP + phosphate + CoA + H(+). The enzyme catalyses a cytidine in tRNA + acetyl-CoA + ATP + H2O = an N(4)-acetylcytidine in tRNA + ADP + phosphate + CoA + H(+). It catalyses the reaction a cytidine in mRNA + acetyl-CoA + ATP + H2O = an N(4)-acetylcytidine in mRNA + ADP + phosphate + CoA + H(+). Catalyzes the formation of N(4)-acetylcytidine (ac(4)C) at the wobble position of tRNA(Met), by using acetyl-CoA as an acetyl donor and ATP (or GTP). Functionally, catalyzes the formation of 267 N(4)-acetylcytidine (ac(4)C) sites in RNA, almost always on the middle C of a CCG motif. Modifications are found in rRNA, ncRNA, mRNA and tRNA. More acetylation is observed at 95 than at 75 or 85 degrees Celsius. The chain is tRNA(Met) cytidine acetyltransferase TmcA from Thermococcus sp. (strain AM4).